Reading from the N-terminus, the 464-residue chain is Sushi repeat-containing protein SRPX (464 aa).

The signal sequence occupies residues 1 to 28 (MGSPGLRPTLLLPQVLLLLLALLHVPPS). S34 carries an O-linked (Xyl...) (chondroitin sulfate) serine glycan. Intrachain disulfides connect C57–C85, C69–C103, C89–C115, C120–C161, and C147–C174. Sushi domains follow at residues 57–117 (CSPI…ICKQ) and 118–176 (KRCP…SCVD). One can recognise an HYR domain in the interval 177-259 (MEPPRIKCPS…TCKFRVKVRV (83 aa)). Positions 260 to 319 (RRCGKLNAPENGYMKCSSDGDNYGATCEFSCIGGYELQGSPARVCQSNLAWSGTEPSCAA) constitute a Sushi 3 domain. Intrachain disulfides connect C262–C304 and C290–C317.

As to expression, normal cells and cells transformed by human papillomavirus type 16 E6E7 and polyomavirus large T. Suppressed in cells transformed by oncogenes such as V-SRC, V-ABL, V-FPS, V-MOS, V-SIS, V-K-RAS, and polyomavirus middle T.

The protein is Sushi repeat-containing protein SRPX (Srpx) of Rattus norvegicus (Rat).